The chain runs to 118 residues: Large ribosomal subunit protein uL24 (118 aa).

Belongs to the universal ribosomal protein uL24 family. Part of the 50S ribosomal subunit.

Its function is as follows. One of two assembly initiator proteins, it binds directly to the 5'-end of the 23S rRNA, where it nucleates assembly of the 50S subunit. Functionally, one of the proteins that surrounds the polypeptide exit tunnel on the outside of the subunit. The polypeptide is Large ribosomal subunit protein uL24 (Prochlorococcus marinus (strain MIT 9313)).